A 547-amino-acid polypeptide reads, in one-letter code: Rho GTPase-activating protein 36 (547 aa).

The first 40 residues, 1–40 (MGGCIPFLKAARALCPRIMPPLLLLSAFIFLVSVLGGAPG), serve as a signal peptide directing secretion. Residues 226–426 (MSLNPIAKQI…AMIDNWDVLF (201 aa)) enclose the Rho-GAP domain. Residues 485-547 (AVLAQSKPSD…AKTGVSYFFP (63 aa)) are disordered. The segment covering 524–539 (EQDRPLLRVPREKEAK) has biased composition (basic and acidic residues).

May interacts (via the Rho-GAP domain) with the active form of RAC1. In terms of tissue distribution, detected in the outer root sheath of hair follicles at the level of the stem cell bulge, during the anagen and telogen phases of hair growth (at protein level).

GTPase activator for the Rho-type GTPases by converting them to an inactive GDP-bound state. This chain is Rho GTPase-activating protein 36 (ARHGAP36), found in Homo sapiens (Human).